Consider the following 607-residue polypeptide: Oligoendopeptidase F homolog (607 aa).

Residue histidine 384 coordinates Zn(2+). Residue glutamate 385 is part of the active site. Residues histidine 388 and histidine 391 each coordinate Zn(2+).

The protein belongs to the peptidase M3B family. Requires Zn(2+) as cofactor.

The chain is Oligoendopeptidase F homolog (pepF) from Mycoplasma genitalium (strain ATCC 33530 / DSM 19775 / NCTC 10195 / G37) (Mycoplasmoides genitalium).